The chain runs to 173 residues: NADH-ubiquinone oxidoreductase chain 6 (173 aa).

A run of 5 helical transmembrane segments spans residues 1–21 (MTYFMFLLLMALVVGLVAVAS), 25–45 (PYFAALGLVVAAGVGCGVLVG), 53–73 (LVLFLIYLGGMLVVFAYSAAL), 87–107 (VLGYVLVYLLGVGLVAGFFWG), and 141–161 (GGMLVICAWVLLLTLLVVLEL).

It belongs to the complex I subunit 6 family.

It localises to the mitochondrion membrane. It catalyses the reaction a ubiquinone + NADH + 5 H(+)(in) = a ubiquinol + NAD(+) + 4 H(+)(out). Core subunit of the mitochondrial membrane respiratory chain NADH dehydrogenase (Complex I) that is believed to belong to the minimal assembly required for catalysis. Complex I functions in the transfer of electrons from NADH to the respiratory chain. The immediate electron acceptor for the enzyme is believed to be ubiquinone. This chain is NADH-ubiquinone oxidoreductase chain 6 (MT-ND6), found in Carassius auratus (Goldfish).